A 465-amino-acid chain; its full sequence is uncharacterized protein (465 aa).

A compositionally biased stretch (polar residues) spans 87–112; it reads KTSQQIDSSPPQTPTTSNGSMMTRRQ. Disordered stretches follow at residues 87-169 and 201-244; these read KTSQ…SYDD and EGYI…NNIF. Residues 113–139 are compositionally biased toward low complexity; the sequence is NANNAISSNNNTNTNVTNGSSSNTSLN. Over residues 141–157 the composition is skewed to acidic residues; that stretch reads GDEEQEEEEEEENDEDS. The segment covering 217 to 244 has biased composition (low complexity); it reads NRNNNNNNINKNNNNNINNNNNNNNNIF.

This is an uncharacterized protein from Dictyostelium discoideum (Social amoeba).